The following is a 418-amino-acid chain: Putative L-glutamine:3-amino-2,3-dideoxy-scyllo-inosose aminotransferase (418 aa).

Position 199 is an N6-(pyridoxal phosphate)lysine (Lys-199).

This sequence belongs to the DegT/DnrJ/EryC1 family. L-glutamine:2-deoxy-scyllo-inosose/scyllo-inosose aminotransferase subfamily. It depends on pyridoxal 5'-phosphate as a cofactor.

It carries out the reaction 3-amino-2,3-dideoxy-scyllo-inosose + L-glutamine = 2-deoxystreptamine + 2-oxoglutaramate. It functions in the pathway metabolic intermediate biosynthesis; 2-deoxystreptamine biosynthesis; 2-deoxystreptamine from D-glucose 6-phosphate: step 4/4. It participates in antibiotic biosynthesis; gentamicin biosynthesis. Catalyzes the transamination of 3-amino-2,3-dideoxy-scyllo-inosose (amino-DOI) into 2-deoxystreptamine (DOS). The chain is Putative L-glutamine:3-amino-2,3-dideoxy-scyllo-inosose aminotransferase (gtmD) from Micromonospora echinospora (Micromonospora purpurea).